The primary structure comprises 501 residues: ATP synthase subunit alpha (501 aa).

ATP is bound at residue 169–176; that stretch reads GDRQTGKT.

Belongs to the ATPase alpha/beta chains family. In terms of assembly, F-type ATPases have 2 components, CF(1) - the catalytic core - and CF(0) - the membrane proton channel. CF(1) has five subunits: alpha(3), beta(3), gamma(1), delta(1), epsilon(1). CF(0) has three main subunits: a(1), b(2) and c(9-12). The alpha and beta chains form an alternating ring which encloses part of the gamma chain. CF(1) is attached to CF(0) by a central stalk formed by the gamma and epsilon chains, while a peripheral stalk is formed by the delta and b chains.

The protein resides in the cell membrane. It catalyses the reaction ATP + H2O + 4 H(+)(in) = ADP + phosphate + 5 H(+)(out). In terms of biological role, produces ATP from ADP in the presence of a proton gradient across the membrane. The alpha chain is a regulatory subunit. This Streptococcus pneumoniae (strain Hungary19A-6) protein is ATP synthase subunit alpha.